Consider the following 446-residue polypeptide: Phosphoglucosamine mutase (446 aa).

The active-site Phosphoserine intermediate is S101. Mg(2+)-binding residues include S101, D240, D242, and D244. The residue at position 101 (S101) is a Phosphoserine.

It belongs to the phosphohexose mutase family. Mg(2+) is required as a cofactor. Activated by phosphorylation.

The catalysed reaction is alpha-D-glucosamine 1-phosphate = D-glucosamine 6-phosphate. Catalyzes the conversion of glucosamine-6-phosphate to glucosamine-1-phosphate. This chain is Phosphoglucosamine mutase, found in Coxiella burnetii (strain Dugway 5J108-111).